The following is an 85-amino-acid chain: UPF0297 protein Clos_1665 (85 aa).

The protein belongs to the UPF0297 family.

This chain is UPF0297 protein Clos_1665, found in Alkaliphilus oremlandii (strain OhILAs) (Clostridium oremlandii (strain OhILAs)).